Consider the following 413-residue polypeptide: 2,3-diketo-5-methylthiopentyl-1-phosphate enolase (413 aa).

Lysine 98 functions as the Proton acceptor in the catalytic mechanism. Substrate is bound by residues lysine 147, 173-176 (KDDE), histidine 264, glycine 337, and 359-360 (GG). Mg(2+) contacts are provided by lysine 173, aspartate 175, and glutamate 176. N6-carboxylysine is present on lysine 173.

The protein belongs to the RuBisCO large chain family. Type IV subfamily. Homodimer. It depends on Mg(2+) as a cofactor.

The catalysed reaction is 5-methylsulfanyl-2,3-dioxopentyl phosphate = 2-hydroxy-5-methylsulfanyl-3-oxopent-1-enyl phosphate. Its pathway is amino-acid biosynthesis; L-methionine biosynthesis via salvage pathway; L-methionine from S-methyl-5-thio-alpha-D-ribose 1-phosphate: step 3/6. Its function is as follows. Catalyzes the enolization of 2,3-diketo-5-methylthiopentyl-1-phosphate (DK-MTP-1-P) into 2-hydroxy-3-keto-5-methylthiopentenyl-1-phosphate (HK-MTPenyl-1-P). The polypeptide is 2,3-diketo-5-methylthiopentyl-1-phosphate enolase (mtnW) (Geobacillus kaustophilus (strain HTA426)).